The primary structure comprises 986 residues: E3 ubiquitin-protein ligase Arkadia (986 aa).

Residues Lys-19, Lys-28, Lys-34, Lys-47, Lys-59, Lys-73, Lys-87, Lys-96, and Lys-110 each participate in a glycyl lysine isopeptide (Lys-Gly) (interchain with G-Cter in SUMO2) cross-link. A compositionally biased stretch (basic and acidic residues) spans 66-89 (HLCDDSQKQEKDMNGNQQEQEKSL). The tract at residues 66 to 106 (HLCDDSQKQEKDMNGNQQEQEKSLVVRKKRKSQQAGPSYVQ) is disordered. The interval 120–191 (QHLGTPSDED…HKWPRTETES (72 aa)) is disordered. The segment covering 132–151 (SSFSDCLSSPSSSLHFGDSD) has biased composition (low complexity). The segment covering 164-173 (RHSQTILNAK) has biased composition (polar residues). Lys-173 participates in a covalent cross-link: Glycyl lysine isopeptide (Lys-Gly) (interchain with G-Cter in SUMO2). Over residues 174–184 (SRSHSARSHKW) the composition is skewed to basic residues. Glycyl lysine isopeptide (Lys-Gly) (interchain with G-Cter in SUMO2) cross-links involve residues Lys-198 and Lys-218. Residues 241 to 404 (VLARRKYALL…VPTTSARMES (164 aa)) are interaction with AXIN1. The disordered stretch occupies residues 248-277 (ALLPSSSSSSENDLSSESSSSSSTEGEEDL). The segment covering 252–271 (SSSSSSENDLSSESSSSSST) has biased composition (low complexity). The short motif at 300 to 304 (VVVIE) is the SUMO interaction motif 1 (SIM) element. The SUMO interaction motif 2 (SIM) motif lies at 325–331 (EVEIVTV). A disordered region spans residues 337 to 373 (SRSTLGHSRSHWSQGSSSHASRPQEPRNRSRISTVIQ). The span at 347–357 (HWSQGSSSHAS) shows a compositional bias: low complexity. An SUMO interaction motif 3 (SIM) motif is present at residues 382-386 (VVDLT). 5 disordered regions span residues 389–471 (EDEP…ETGP), 506–561 (QQHG…SYHE), 610–646 (APSQ…RHYM), 659–684 (HQAS…VDYV), and 696–719 (ISSH…TAAP). Positions 395–466 (VPTTSARMES…DSRRTTSSAV (72 aa)) are enriched in polar residues. Basic residues predominate over residues 508 to 522 (HGHHFQHHHHHHHTP). Residues 551–561 (ANSSSGTSYHE) are compositionally biased toward polar residues. Residues 670-680 (NPPPQTQPPPQ) are compositionally biased toward pro residues. Residues 907 to 909 (YPH) form a ubiquitin binding region. Glycyl lysine isopeptide (Lys-Gly) (interchain with G-Cter in SUMO2) cross-links involve residues Lys-915 and Lys-919. Zn(2+)-binding residues include Cys-934 and Cys-937. Residues 934-975 (CTICLSILEEGEDVRRLPCMHLFHQVCVDQWLITNKKCPICR) form an RING-type; atypical zinc finger. The interval 949–953 (RLPCM) is ubiquitin binding. Residues His-957 and Cys-960 each coordinate Zn(2+).

It belongs to the Arkadia family. Monomer. Interacts with SMAD6, SMAD7, AXIN1, AXIN2 and SKIL isoform SNON. Interacts with (phosphorylated) SMAD2 and SMAD3. Part of a complex containing RNF111, AXIN1 and SMAD7. Interacts (via SIM domains) with SUMO1 and SUMO2.

The protein resides in the nucleus. It is found in the cytoplasm. The protein localises to the PML body. It catalyses the reaction S-ubiquitinyl-[E2 ubiquitin-conjugating enzyme]-L-cysteine + [acceptor protein]-L-lysine = [E2 ubiquitin-conjugating enzyme]-L-cysteine + N(6)-ubiquitinyl-[acceptor protein]-L-lysine.. It participates in protein modification; protein ubiquitination. With respect to regulation, binds free ubiquitin non-covalently via its RING-type zinc finger. Ubiquitin-binding leads to enhance the E3 ubiquitin-protein ligase activity by stabilizing the ubiquitin-conjugating enzyme E2 (donor ubiquitin) in the 'closed' conformation and activating ubiquitin transfer. E3 ubiquitin-protein ligase. Required for mesoderm patterning during embryonic development. Acts as an enhancer of the transcriptional responses of the SMAD2/SMAD3 effectors, which are activated downstream of BMP. Acts by mediating ubiquitination and degradation of SMAD inhibitors such as SMAD7, inducing their proteasomal degradation and thereby enhancing the transcriptional activity of TGF-beta and BMP. In addition to enhance transcription of SMAD2/SMAD3 effectors, also regulates their turnover by mediating their ubiquitination and subsequent degradation, coupling their activation with degradation, thereby ensuring that only effectors 'in use' are degraded. Activates SMAD3/SMAD4-dependent transcription by triggering signal-induced degradation of SNON isoform of SKIL. Associates with UBE2D2 as an E2 enzyme. Specifically binds polysumoylated chains via SUMO interaction motifs (SIMs) and mediates ubiquitination of sumoylated substrates. Catalyzes 'Lys-63'-linked ubiquitination of sumoylated XPC in response to UV irradiation, promoting nucleotide excision repair. Mediates ubiquitination and degradation of sumoylated PML. The regulation of the BMP-SMAD signaling is however independent of sumoylation and is not dependent of SUMO interaction motifs (SIMs). In Pongo abelii (Sumatran orangutan), this protein is E3 ubiquitin-protein ligase Arkadia (RNF111).